We begin with the raw amino-acid sequence, 1080 residues long: DNA-directed RNA polymerase subunit beta C-terminal section (1080 aa).

Belongs to the RNA polymerase beta chain family. As to quaternary structure, in plastids the minimal PEP RNA polymerase catalytic core is composed of four subunits: alpha, beta, beta', and beta''. When a (nuclear-encoded) sigma factor is associated with the core the holoenzyme is formed, which can initiate transcription.

It is found in the plastid. The protein localises to the chloroplast. It catalyses the reaction RNA(n) + a ribonucleoside 5'-triphosphate = RNA(n+1) + diphosphate. In terms of biological role, DNA-dependent RNA polymerase catalyzes the transcription of DNA into RNA using the four ribonucleoside triphosphates as substrates. The polypeptide is DNA-directed RNA polymerase subunit beta C-terminal section (rpoB2) (Stigeoclonium helveticum (Green alga)).